Consider the following 405-residue polypeptide: Acetate kinase (405 aa).

Asn-7 serves as a coordination point for Mg(2+). Lys-14 provides a ligand contact to ATP. Arg-99 provides a ligand contact to substrate. Asp-156 acts as the Proton donor/acceptor in catalysis. Residues 215-219 (HLGNG), 290-292 (DMR), and 338-342 (GVGEH) contribute to the ATP site. Position 391 (Glu-391) interacts with Mg(2+).

Belongs to the acetokinase family. In terms of assembly, homodimer. Mg(2+) serves as cofactor. Mn(2+) is required as a cofactor.

The protein localises to the cytoplasm. The catalysed reaction is acetate + ATP = acetyl phosphate + ADP. The protein operates within metabolic intermediate biosynthesis; acetyl-CoA biosynthesis; acetyl-CoA from acetate: step 1/2. Functionally, catalyzes the formation of acetyl phosphate from acetate and ATP. Can also catalyze the reverse reaction. The protein is Acetate kinase of Nostoc punctiforme (strain ATCC 29133 / PCC 73102).